A 224-amino-acid chain; its full sequence is Attacin-A (224 aa).

Positions Met-1 to Ala-20 are cleaved as a signal peptide. Positions Leu-21–Arg-34 are excised as a propeptide.

This sequence belongs to the attacin/sarcotoxin-2 family. As to expression, hemolymph (at protein level).

It is found in the secreted. Functionally, hemolymph antibacterial protein. In Drosophila melanogaster (Fruit fly), this protein is Attacin-A (AttA).